The primary structure comprises 422 residues: Glucosylglycerol-phosphate phosphatase (422 aa).

Asp-403 serves as the catalytic Proton donor.

It belongs to the histidine acid phosphatase family. As to quaternary structure, monomer. Interacts with GGPS.

It catalyses the reaction 2-O-(alpha-D-glucopyranosyl)-sn-glycerol 3-phosphate + H2O = 2-O-(alpha-D-glucopyranosyl)glycerol + phosphate. Phosphorylates glucosylglycerol-phosphate the precursor of the osmoprotectant glucosylglycerol necessary for salt adaptation of Synechocystis. This is Glucosylglycerol-phosphate phosphatase (stpA) from Synechocystis sp. (strain ATCC 27184 / PCC 6803 / Kazusa).